The chain runs to 338 residues: Phenylalanine--tRNA ligase alpha subunit (338 aa).

Residue E252 coordinates Mg(2+).

This sequence belongs to the class-II aminoacyl-tRNA synthetase family. Phe-tRNA synthetase alpha subunit type 1 subfamily. In terms of assembly, tetramer of two alpha and two beta subunits. The cofactor is Mg(2+).

It localises to the cytoplasm. The enzyme catalyses tRNA(Phe) + L-phenylalanine + ATP = L-phenylalanyl-tRNA(Phe) + AMP + diphosphate + H(+). The chain is Phenylalanine--tRNA ligase alpha subunit from Pseudomonas aeruginosa (strain ATCC 15692 / DSM 22644 / CIP 104116 / JCM 14847 / LMG 12228 / 1C / PRS 101 / PAO1).